The sequence spans 212 residues: GrpE protein homolog, mitochondrial (212 aa).

This sequence belongs to the GrpE family. In terms of assembly, component of the PAM complex, at least composed of mtHsp70, MGE1, TIM44, PAM16, PAM17 and PAM18.

It is found in the mitochondrion matrix. Its function is as follows. Essential component of the PAM complex, a complex required for the translocation of transit peptide-containing proteins from the inner membrane into the mitochondrial matrix in an ATP-dependent manner. Seems to control the nucleotide-dependent binding of SSC1 to substrate proteins. The protein is GrpE protein homolog, mitochondrial (mge1) of Eremothecium gossypii (strain ATCC 10895 / CBS 109.51 / FGSC 9923 / NRRL Y-1056) (Yeast).